We begin with the raw amino-acid sequence, 247 residues long: Neurotrophic factor BDNF precursor form (247 aa).

The first 18 residues, 1-18 (MTILFLTMVISYFGCMKA), serve as a signal peptide directing secretion. A propeptide spanning residues 19-128 (APMKEASVRG…AANMSMRVRR (110 aa)) is cleaved from the precursor. N121 carries N-linked (GlcNAc...) asparagine glycosylation. Intrachain disulfides connect C141–C208, C186–C237, and C196–C239.

It belongs to the NGF-beta family. As to quaternary structure, monomers and homodimers. Binds to NTRK2/TRKB. Can form heterodimers with other neurotrophin family members, such as NTF3 and NTF4 (in vitro), but the physiological relevance of this is not clear. BDNF precursor form: interacts with the heterodimer formed by NGFR and SORCS2. Mature BDNF has much lower affinity for the heterodimer formed by NGFR and SORCS2. N-glycosylated and glycosulfated, contrary to mature BDNF. Post-translationally, mature BDNF is produced by proteolytic removal of the propeptide, catalyzed by a FURIN family member. In addition, the precursor form is proteolytically cleaved within the propeptide, but this is not an obligatory intermediate for the production of mature BDNF. Can be converted into mature BDNF by plasmin (PLG).

Its subcellular location is the secreted. Important signaling molecule that activates signaling cascades downstream of NTRK2. During development, promotes the survival and differentiation of selected neuronal populations of the peripheral and central nervous systems. Participates in axonal growth, pathfinding and in the modulation of dendritic growth and morphology. Major regulator of synaptic transmission and plasticity at adult synapses in many regions of the CNS. The versatility of BDNF is emphasized by its contribution to a range of adaptive neuronal responses including long-term potentiation (LTP), long-term depression (LTD), certain forms of short-term synaptic plasticity, as well as homeostatic regulation of intrinsic neuronal excitability. This is Neurotrophic factor BDNF precursor form (BDNF) from Canis lupus familiaris (Dog).